Here is a 572-residue protein sequence, read N- to C-terminus: Hemolysin-1 (572 aa).

Its function is as follows. Bacterial hemolysins are exotoxins that attack blood cell membranes and cause cell rupture by mechanisms not clearly defined. The sequence is that of Hemolysin-1 (ash1) from Aeromonas salmonicida.